Consider the following 324-residue polypeptide: tRNA dimethylallyltransferase (324 aa).

An ATP-binding site is contributed by Gly-17 to Thr-24. A substrate-binding site is contributed by Thr-19–Thr-24. 3 interaction with substrate tRNA regions span residues Asp-42–Leu-45, Gln-166–Arg-170, and Arg-251–Arg-256.

It belongs to the IPP transferase family. Monomer. It depends on Mg(2+) as a cofactor.

It carries out the reaction adenosine(37) in tRNA + dimethylallyl diphosphate = N(6)-dimethylallyladenosine(37) in tRNA + diphosphate. In terms of biological role, catalyzes the transfer of a dimethylallyl group onto the adenine at position 37 in tRNAs that read codons beginning with uridine, leading to the formation of N6-(dimethylallyl)adenosine (i(6)A). This is tRNA dimethylallyltransferase from Burkholderia thailandensis (strain ATCC 700388 / DSM 13276 / CCUG 48851 / CIP 106301 / E264).